We begin with the raw amino-acid sequence, 386 residues long: Zinc transporter 7-A (386 aa).

Residues 1 to 37 (MLPLSIKDDEYKPPKFNLARKVSGWIRSIFSDSTSRN) are Cytoplasmic-facing. The helical transmembrane segment at 38-58 (LFCFLCLNLSFAFVELFYGIW) threads the bilayer. The Lumenal portion of the chain corresponds to 59-67 (SNSLGLISD). A helical membrane pass occupies residues 68–88 (SFHMFFDCTALLAGLAASVIS). Over 89 to 102 (RWKTNEAFSYGYVR) the chain is Cytoplasmic. Residues 103–123 (AEVLAGFVNGLFLIFTAFFIF) form a helical membrane-spanning segment. Topologically, residues 124–140 (SEGVERALDTPEVHHER) are lumenal. A helical membrane pass occupies residues 141 to 161 (LLPVSIMGLLVNIIGIFVFQH). The tract at residues 161–222 (HGGGHGHSHE…GHSHDHSPKH (62 aa)) is his-rich loop. Topologically, residues 162 to 246 (GGGHGHSHES…KGSSKQILEG (85 aa)) are cytoplasmic. The segment at 167-239 (HSHESGHGHS…DEPPEEHKGS (73 aa)) is disordered. The span at 228-238 (CHDEPPEEHKG) shows a compositional bias: basic and acidic residues. The chain crosses the membrane as a helical span at residues 247–267 (VFLHIVADTLGSVGVIFSTIL). The Lumenal portion of the chain corresponds to 268–272 (MQRYG). The helical transmembrane segment at 273 to 293 (LMIADPICSMLIALLIFVSVI) threads the bilayer. Residues 294 to 386 (PLLKQSIGIL…LYVQIDFAAI (93 aa)) are Cytoplasmic-facing.

Belongs to the cation diffusion facilitator (CDF) transporter (TC 2.A.4) family. SLC30A subfamily. As to quaternary structure, homooligomer.

The protein localises to the golgi apparatus membrane. It localises to the cytoplasmic vesicle. It is found in the golgi apparatus. Its subcellular location is the trans-Golgi network. The protein resides in the sarcoplasmic reticulum. The protein localises to the mitochondrion. The catalysed reaction is Zn(2+)(in) = Zn(2+)(out). In terms of biological role, zinc ion transporter mediating zinc entry from the cytosol into the lumen of organelles along the secretory pathway. By contributing to zinc ion homeostasis within the early secretory pathway, regulates the activation and folding of enzymes like alkaline phosphatases. This chain is Zinc transporter 7-A (slc30a7-a), found in Xenopus laevis (African clawed frog).